The sequence spans 307 residues: Nucleotide-binding protein Sca_0414 (307 aa).

ATP is bound at residue 19-26 (GMSGAGKS). GTP is bound at residue 70–73 (DLRG).

The protein belongs to the RapZ-like family.

In terms of biological role, displays ATPase and GTPase activities. The protein is Nucleotide-binding protein Sca_0414 of Staphylococcus carnosus (strain TM300).